A 234-amino-acid polypeptide reads, in one-letter code: Probable transcriptional regulatory protein Pfl01_3677 (234 aa).

The protein belongs to the TACO1 family.

The protein localises to the cytoplasm. This chain is Probable transcriptional regulatory protein Pfl01_3677, found in Pseudomonas fluorescens (strain Pf0-1).